Consider the following 357-residue polypeptide: Histidinol-phosphate aminotransferase (357 aa).

Residue K222 is modified to N6-(pyridoxal phosphate)lysine.

It belongs to the class-II pyridoxal-phosphate-dependent aminotransferase family. Histidinol-phosphate aminotransferase subfamily. Homodimer. Pyridoxal 5'-phosphate serves as cofactor.

The enzyme catalyses L-histidinol phosphate + 2-oxoglutarate = 3-(imidazol-4-yl)-2-oxopropyl phosphate + L-glutamate. Its pathway is amino-acid biosynthesis; L-histidine biosynthesis; L-histidine from 5-phospho-alpha-D-ribose 1-diphosphate: step 7/9. In Leuconostoc mesenteroides subsp. mesenteroides (strain ATCC 8293 / DSM 20343 / BCRC 11652 / CCM 1803 / JCM 6124 / NCDO 523 / NBRC 100496 / NCIMB 8023 / NCTC 12954 / NRRL B-1118 / 37Y), this protein is Histidinol-phosphate aminotransferase.